A 251-amino-acid chain; its full sequence is Cell division protein ZapD (251 aa).

The protein belongs to the ZapD family. As to quaternary structure, interacts with FtsZ.

The protein resides in the cytoplasm. Cell division factor that enhances FtsZ-ring assembly. Directly interacts with FtsZ and promotes bundling of FtsZ protofilaments, with a reduction in FtsZ GTPase activity. The chain is Cell division protein ZapD from Burkholderia orbicola (strain MC0-3).